Consider the following 245-residue polypeptide: Carboxy-S-adenosyl-L-methionine synthase (245 aa).

S-adenosyl-L-methionine-binding positions include Y42, 67-69, 92-93, 120-121, N135, and R202; these read GCS, DN, and DI.

The protein belongs to the class I-like SAM-binding methyltransferase superfamily. Cx-SAM synthase family. As to quaternary structure, homodimer.

It carries out the reaction prephenate + S-adenosyl-L-methionine = carboxy-S-adenosyl-L-methionine + 3-phenylpyruvate + H2O. Functionally, catalyzes the conversion of S-adenosyl-L-methionine (SAM) to carboxy-S-adenosyl-L-methionine (Cx-SAM). In Vibrio vulnificus (strain CMCP6), this protein is Carboxy-S-adenosyl-L-methionine synthase.